The primary structure comprises 314 residues: Homeobox-leucine zipper protein HAT7 (314 aa).

Positions His-77 to His-109 are disordered. Over residues Gln-82–Asp-95 the composition is skewed to polar residues. The homeobox DNA-binding region spans Leu-112–Gln-171. The leucine-zipper stretch occupies residues Leu-172–Leu-207.

This sequence belongs to the HD-ZIP homeobox family. Class I subfamily. As to expression, expressed predominantly in flowers, and in the cortex of the root and the stem.

It is found in the nucleus. Probable transcription factor. This is Homeobox-leucine zipper protein HAT7 (HAT7) from Arabidopsis thaliana (Mouse-ear cress).